The sequence spans 515 residues: Bifunctional purine biosynthesis protein PurH (515 aa).

The 145-residue stretch at 1–145 (MTKRALISVS…KNHASVTVVV (145 aa)) folds into the MGS-like domain.

Belongs to the PurH family.

It carries out the reaction (6R)-10-formyltetrahydrofolate + 5-amino-1-(5-phospho-beta-D-ribosyl)imidazole-4-carboxamide = 5-formamido-1-(5-phospho-D-ribosyl)imidazole-4-carboxamide + (6S)-5,6,7,8-tetrahydrofolate. The catalysed reaction is IMP + H2O = 5-formamido-1-(5-phospho-D-ribosyl)imidazole-4-carboxamide. Its pathway is purine metabolism; IMP biosynthesis via de novo pathway; 5-formamido-1-(5-phospho-D-ribosyl)imidazole-4-carboxamide from 5-amino-1-(5-phospho-D-ribosyl)imidazole-4-carboxamide (10-formyl THF route): step 1/1. The protein operates within purine metabolism; IMP biosynthesis via de novo pathway; IMP from 5-formamido-1-(5-phospho-D-ribosyl)imidazole-4-carboxamide: step 1/1. In Streptococcus pyogenes serotype M6 (strain ATCC BAA-946 / MGAS10394), this protein is Bifunctional purine biosynthesis protein PurH.